Consider the following 139-residue polypeptide: Peptide methionine sulfoxide reductase MsrB (139 aa).

Positions 8-130 constitute a MsrB domain; sequence EREWQRELSP…NSASLQLKTD (123 aa). The Zn(2+) site is built by Cys47, Cys50, Cys96, and Cys99. The Nucleophile role is filled by Cys119.

It belongs to the MsrB Met sulfoxide reductase family. The cofactor is Zn(2+).

The catalysed reaction is L-methionyl-[protein] + [thioredoxin]-disulfide + H2O = L-methionyl-(R)-S-oxide-[protein] + [thioredoxin]-dithiol. The protein is Peptide methionine sulfoxide reductase MsrB of Acinetobacter baylyi (strain ATCC 33305 / BD413 / ADP1).